A 264-amino-acid chain; its full sequence is Apolipoprotein A-I (264 aa).

The signal sequence occupies residues 1-18 (MKAVVLALAVLFLTGSQA). A run of 2 repeats spans residues 67-88 (LHLL…EQLG) and 89-110 (PVTH…QEMN). The 10 X approximate tandem repeats stretch occupies residues 67–264 (LHLLDNWDTL…DEASKKLNAQ (198 aa)). M109 carries the methionine sulfoxide modification. The stretch at 111–121 (KDLEEVKVKVQ) is one 3; half-length repeat. Repeat copies occupy residues 122-143 (PYLD…EKVG), 144-165 (PLGA…EKLT), 166-187 (PLGE…TQLA), 188-207 (PYSD…IRDS), and 208-229 (PSLA…EKAK). The stretch at 230–240 (PALEDLRQGLM) is one 9; half-length repeat. Repeat unit 10 spans residues 241-264 (PVLENLKTTVLAAIDEASKKLNAQ).

It belongs to the apolipoprotein A1/A4/E family. As to quaternary structure, homodimer. Interacts with APOA1BP and CLU. Component of a sperm activating protein complex (SPAP), consisting of APOA1, an immunoglobulin heavy chain, an immunoglobulin light chain and albumin. Interacts with NDRG1. Interacts with SCGB3A2. Interacts with NAXE and YJEFN3. Glycosylated. In terms of processing, palmitoylated. Post-translationally, phosphorylation sites are present in the extracellular medium.

Its subcellular location is the secreted. Participates in the reverse transport of cholesterol from tissues to the liver for excretion by promoting cholesterol efflux from tissues and by acting as a cofactor for the lecithin cholesterol acyltransferase (LCAT). As part of the SPAP complex, activates spermatozoa motility. The polypeptide is Apolipoprotein A-I (APOA1) (Jaculus jaculus (Lesser Egyptian jerboa)).